The primary structure comprises 119 residues: Large ribosomal subunit protein bL20 (119 aa).

This sequence belongs to the bacterial ribosomal protein bL20 family.

Functionally, binds directly to 23S ribosomal RNA and is necessary for the in vitro assembly process of the 50S ribosomal subunit. It is not involved in the protein synthesizing functions of that subunit. The polypeptide is Large ribosomal subunit protein bL20 (Halalkalibacterium halodurans (strain ATCC BAA-125 / DSM 18197 / FERM 7344 / JCM 9153 / C-125) (Bacillus halodurans)).